Consider the following 312-residue polypeptide: Acetyl-coenzyme A carboxylase carboxyl transferase subunit beta (312 aa).

One can recognise a CoA carboxyltransferase N-terminal domain in the interval 24–293; sequence LWIKCPDSGQ…VEHAKPAPQL (270 aa). The disordered stretch occupies residues 286–312; the sequence is HAKPAPQLPPPAKPAETAEAPAVATSA. Residues 299–312 show a composition bias toward low complexity; the sequence is PAETAEAPAVATSA.

This sequence belongs to the AccD/PCCB family. In terms of assembly, acetyl-CoA carboxylase is a heterohexamer composed of biotin carboxyl carrier protein (AccB), biotin carboxylase (AccC) and two subunits each of ACCase subunit alpha (AccA) and ACCase subunit beta (AccD).

The protein resides in the cytoplasm. It carries out the reaction N(6)-carboxybiotinyl-L-lysyl-[protein] + acetyl-CoA = N(6)-biotinyl-L-lysyl-[protein] + malonyl-CoA. It participates in lipid metabolism; malonyl-CoA biosynthesis; malonyl-CoA from acetyl-CoA: step 1/1. Its function is as follows. Component of the acetyl coenzyme A carboxylase (ACC) complex. Biotin carboxylase (BC) catalyzes the carboxylation of biotin on its carrier protein (BCCP) and then the CO(2) group is transferred by the transcarboxylase to acetyl-CoA to form malonyl-CoA. The polypeptide is Acetyl-coenzyme A carboxylase carboxyl transferase subunit beta (Bradyrhizobium sp. (strain ORS 278)).